The sequence spans 492 residues: Vacuolar fusion protein CCZ1 homolog (492 aa).

Residues 255–275 (SVHAGPTSSSSNGTASVERPL) are disordered. Over residues 260 to 269 (PTSSSSNGTA) the composition is skewed to polar residues.

This sequence belongs to the CCZ1 family. Interacts with MON1.

It localises to the endosome. The protein resides in the prevacuolar compartment. Functionally, plays an important role in membrane trafficking through the secretory apparatus. In complex with MON1, acts as a guanine exchange factor (GEF) for Rab7 protein family. Promotes the exchange of GDP to GTP, converting it from an inactive GDP-bound form into an active GTP-bound form. The active form is involved in protein trafficking from prevacuolar compartments (PVCs) to vacuoles. May serve as a linker between Rab5 and Rab7 protein families in PVCs and mediate PVC maturation. The protein is Vacuolar fusion protein CCZ1 homolog of Oryza sativa subsp. japonica (Rice).